Reading from the N-terminus, the 106-residue chain is Large ribosomal subunit protein eL30 (106 aa).

It belongs to the eukaryotic ribosomal protein eL30 family. In terms of assembly, component of the large ribosomal subunit. Mature ribosomes consist of a small (40S) and a large (60S) subunit. The 40S subunit contains about 32 different proteins and 1 molecule of RNA (18S). The 60S subunit contains 45 different proteins and 3 molecules of RNA (25S, 5.8S and 5S).

It localises to the cytoplasm. Component of the ribosome, a large ribonucleoprotein complex responsible for the synthesis of proteins in the cell. The small ribosomal subunit (SSU) binds messenger RNAs (mRNAs) and translates the encoded message by selecting cognate aminoacyl-transfer RNA (tRNA) molecules. The large subunit (LSU) contains the ribosomal catalytic site termed the peptidyl transferase center (PTC), which catalyzes the formation of peptide bonds, thereby polymerizing the amino acids delivered by tRNAs into a polypeptide chain. The nascent polypeptides leave the ribosome through a tunnel in the LSU and interact with protein factors that function in enzymatic processing, targeting, and the membrane insertion of nascent chains at the exit of the ribosomal tunnel. In Candida albicans (strain SC5314 / ATCC MYA-2876) (Yeast), this protein is Large ribosomal subunit protein eL30.